Reading from the N-terminus, the 104-residue chain is Ribonuclease P protein component 4 (104 aa).

Cysteine 57, cysteine 60, cysteine 83, and cysteine 86 together coordinate Zn(2+).

Belongs to the eukaryotic/archaeal RNase P protein component 4 family. As to quaternary structure, consists of a catalytic RNA component and at least 4-5 protein subunits. Requires Zn(2+) as cofactor.

It localises to the cytoplasm. The enzyme catalyses Endonucleolytic cleavage of RNA, removing 5'-extranucleotides from tRNA precursor.. Part of ribonuclease P, a protein complex that generates mature tRNA molecules by cleaving their 5'-ends. This is Ribonuclease P protein component 4 from Saccharolobus islandicus (strain L.S.2.15 / Lassen #1) (Sulfolobus islandicus).